The following is a 357-amino-acid chain: Olfactory receptor 2B2 (357 aa).

The Extracellular segment spans residues 1 to 25; the sequence is MNWVNKSVPQEFILLVFSDQPWLEI. Residue Asn5 is glycosylated (N-linked (GlcNAc...) asparagine). Residues 26–49 traverse the membrane as a helical segment; the sequence is PPFVMFLFSYILTIFGNLTIILVS. Topologically, residues 50 to 57 are cytoplasmic; sequence HVDFKLHT. The chain crosses the membrane as a helical span at residues 58–79; that stretch reads PMYFFLSNLSLLDLCYTTSTVP. Topologically, residues 80–100 are extracellular; the sequence is QMLVNICNTRKVISYGGCVAQ. Cysteines 97 and 189 form a disulfide. The chain crosses the membrane as a helical span at residues 101 to 120; the sequence is LFIFLALGSTECLLLAVMCF. The Cytoplasmic segment spans residues 121–139; that stretch reads DRFVAICRPLHYSIIMHQR. A helical membrane pass occupies residues 140-158; it reads LCFQLAAASWISGFSNSVL. Residues 159–195 lie on the Extracellular side of the membrane; it reads QSTWTLKMPLCGHKEVDHFFCEVPALLKLSCVDTTAN. The helical transmembrane segment at 196–219 threads the bilayer; that stretch reads EAELFFISVLFLLIPVTLILISYA. Residues 220-236 lie on the Cytoplasmic side of the membrane; that stretch reads FIVQAVLRIQSAEGQRK. A helical transmembrane segment spans residues 237–259; the sequence is AFGTCGSHLIVVSLFYGTAISMY. Residues 260–272 are Extracellular-facing; that stretch reads LQPPSPSSKDRGK. The chain crosses the membrane as a helical span at residues 273 to 292; it reads MVSLFCGIIAPMLNPLIYTL. Over 293 to 357 the chain is Cytoplasmic; the sequence is RNKEVKEAFK…YCNLPQRKFP (65 aa).

This sequence belongs to the G-protein coupled receptor 1 family.

It is found in the cell membrane. Functionally, odorant receptor. The chain is Olfactory receptor 2B2 (OR2B2) from Homo sapiens (Human).